Consider the following 353-residue polypeptide: Photosystem II protein D1 (353 aa).

N-acetylthreonine is present on Thr2. A Phosphothreonine modification is found at Thr2. The next 3 helical transmembrane spans lie at 29–46 (YIGWFGVLMIPTLLTATS), 118–133 (HFLLGVACYMGREWEL), and 142–156 (WIAVAYSAPVAAATA). His118 contributes to the chlorophyll a binding site. Tyr126 provides a ligand contact to pheophytin a. Asp170 and Glu189 together coordinate [CaMn4O5] cluster. The helical transmembrane segment at 197–218 (FHMLGVAGVFGGSLFSAMHGSL) threads the bilayer. His198 is a chlorophyll a binding site. Residues His215 and 264-265 (SF) contribute to the a quinone site. His215 is a binding site for Fe cation. His272 contributes to the Fe cation binding site. The chain crosses the membrane as a helical span at residues 274–288 (FLAAWPVVGIWFTAL). Residues His332, Glu333, Asp342, and Ala344 each coordinate [CaMn4O5] cluster. The propeptide occupies 345–353 (AMEAPSVNG).

This sequence belongs to the reaction center PufL/M/PsbA/D family. PSII is composed of 1 copy each of membrane proteins PsbA, PsbB, PsbC, PsbD, PsbE, PsbF, PsbH, PsbI, PsbJ, PsbK, PsbL, PsbM, PsbT, PsbX, PsbY, PsbZ, Psb30/Ycf12, at least 3 peripheral proteins of the oxygen-evolving complex and a large number of cofactors. It forms dimeric complexes. The D1/D2 heterodimer binds P680, chlorophylls that are the primary electron donor of PSII, and subsequent electron acceptors. It shares a non-heme iron and each subunit binds pheophytin, quinone, additional chlorophylls, carotenoids and lipids. D1 provides most of the ligands for the Mn4-Ca-O5 cluster of the oxygen-evolving complex (OEC). There is also a Cl(-1) ion associated with D1 and D2, which is required for oxygen evolution. The PSII complex binds additional chlorophylls, carotenoids and specific lipids. is required as a cofactor. Post-translationally, tyr-161 forms a radical intermediate that is referred to as redox-active TyrZ, YZ or Y-Z. C-terminally processed by CTPA; processing is essential to allow assembly of the oxygen-evolving complex and thus photosynthetic growth.

The protein resides in the plastid. It localises to the chloroplast thylakoid membrane. The catalysed reaction is 2 a plastoquinone + 4 hnu + 2 H2O = 2 a plastoquinol + O2. Functionally, photosystem II (PSII) is a light-driven water:plastoquinone oxidoreductase that uses light energy to abstract electrons from H(2)O, generating O(2) and a proton gradient subsequently used for ATP formation. It consists of a core antenna complex that captures photons, and an electron transfer chain that converts photonic excitation into a charge separation. The D1/D2 (PsbA/PsbD) reaction center heterodimer binds P680, the primary electron donor of PSII as well as several subsequent electron acceptors. This chain is Photosystem II protein D1, found in Phaseolus vulgaris (Kidney bean).